The following is a 266-amino-acid chain: Pyrrolizixenacetamide deacetylase (266 aa).

Position 28 (Thr-28) interacts with acetate. Ser-94 serves as the catalytic Nucleophile. Leu-95 contributes to the acetate binding site. Residues Asp-215 and His-242 each act as charge relay system in the active site. His-242 provides a ligand contact to acetate.

The protein belongs to the AB hydrolase superfamily. In terms of assembly, homodimer.

It carries out the reaction pyrrolizixenacetamide + H2O = 3-amino-5,6,7,7a-tetrahydro-1H-pyrrolizin-1-one + acetate + H(+). Involved in the biosynthetic pathway of pyrrolizwilline, a pyrrolizidine alkaloid. Catalyzes the N-deacetylation of pyrrolizixenacetamide. The sequence is that of Pyrrolizixenacetamide deacetylase from Xenorhabdus hominickii.